Reading from the N-terminus, the 124-residue chain is Small ribosomal subunit protein uS12 (124 aa).

A 3-methylthioaspartic acid modification is found at Asp-89.

It belongs to the universal ribosomal protein uS12 family. Part of the 30S ribosomal subunit. Contacts proteins S8 and S17. May interact with IF1 in the 30S initiation complex.

Functionally, with S4 and S5 plays an important role in translational accuracy. In terms of biological role, interacts with and stabilizes bases of the 16S rRNA that are involved in tRNA selection in the A site and with the mRNA backbone. Located at the interface of the 30S and 50S subunits, it traverses the body of the 30S subunit contacting proteins on the other side and probably holding the rRNA structure together. The combined cluster of proteins S8, S12 and S17 appears to hold together the shoulder and platform of the 30S subunit. In Caldanaerobacter subterraneus subsp. tengcongensis (strain DSM 15242 / JCM 11007 / NBRC 100824 / MB4) (Thermoanaerobacter tengcongensis), this protein is Small ribosomal subunit protein uS12.